The primary structure comprises 764 residues: Metabotropic glutamate receptor-like protein H (764 aa).

An N-terminal signal peptide occupies residues 1-20 (MKNILKILILILICINKINC). Residues 21-393 (LDGDGKQFRM…EVEFSQSIQN (373 aa)) lie on the Extracellular side of the membrane. Residues N72, N260, N278, N344, and N379 are each glycosylated (N-linked (GlcNAc...) asparagine). The helical transmembrane segment at 394–414 (GFSITTGILIGITILMMIGII) threads the bilayer. At 415-427 (KYSKTPSMRSASP) the chain is on the cytoplasmic side. A helical membrane pass occupies residues 428–448 (IFLNFILAGGIIVYIGIIVWV). Over 449–464 (GPMSTHSCNARLWLVT) the chain is Extracellular. The chain crosses the membrane as a helical span at residues 465–485 (LGFSTLIGSLVVKNFRIWLIF). Residues 486–500 (DNPELKSIKITNYQL) lie on the Cytoplasmic side of the membrane. The chain crosses the membrane as a helical span at residues 501–521 (FPWVGACLVINIILMAILTSV). Residues 522-552 (GDLKQIDAMNIDSLGKYEYMKVCKMNSSGAS) are Extracellular-facing. N-linked (GlcNAc...) asparagine glycosylation is present at N547. The chain crosses the membrane as a helical span at residues 553–573 (TLYTILAYFAALLLVGVFVSW). The Cytoplasmic portion of the chain corresponds to 574 to 587 (KIRIVDILEFNESG). A helical membrane pass occupies residues 588–608 (AIANTLYAISFCLFVIVPLMI). At 609–617 (SPQDMQSET) the chain is on the extracellular side. Residues 618-638 (IILCTTGLFITTAALLIIFIP) traverse the membrane as a helical segment. At 639–764 (KFWRVFRKGA…IIVNDSENNN (126 aa)) the chain is on the cytoplasmic side. Residues 664–764 (ATARAESGSK…IIVNDSENNN (101 aa)) are disordered. Residues 671 to 690 (GSKGSNGNASSGNRTNRRGN) are compositionally biased toward low complexity. The span at 707–719 (ENQKEKEKIKDDV) shows a compositional bias: basic and acidic residues. Positions 731-748 (FTDEASDTDNNEFNDIEL) are enriched in acidic residues.

It in the N-terminal section; belongs to the BMP lipoprotein family. This sequence in the C-terminal section; belongs to the G-protein coupled receptor 3 family. GABA-B receptor subfamily.

The protein resides in the membrane. The sequence is that of Metabotropic glutamate receptor-like protein H (grlH) from Dictyostelium discoideum (Social amoeba).